Here is a 151-residue protein sequence, read N- to C-terminus: Protein SprT-like (151 aa).

Residues 7 to 147 form the SprT-like domain; the sequence is QKLTESISES…GKCKGKLHLH (141 aa). Position 67 (histidine 67) interacts with Zn(2+). Glutamate 68 is an active-site residue. Histidine 71 is a binding site for Zn(2+).

The protein belongs to the SprT family. Zn(2+) is required as a cofactor.

The protein localises to the cytoplasm. The sequence is that of Protein SprT-like from Staphylococcus carnosus (strain TM300).